Here is a 374-residue protein sequence, read N- to C-terminus: tRNA (guanine(26)-N(2))-dimethyltransferase (374 aa).

The Trm1 methyltransferase domain occupies 4–368 (IEATEGTTTF…APLPVLYDAI (365 aa)). Positions 41, 66, 82, 108, and 109 each coordinate S-adenosyl-L-methionine. Residues Cys-237, Cys-240, Cys-256, and Cys-259 each coordinate Zn(2+).

This sequence belongs to the class I-like SAM-binding methyltransferase superfamily. Trm1 family.

It carries out the reaction guanosine(26) in tRNA + 2 S-adenosyl-L-methionine = N(2)-dimethylguanosine(26) in tRNA + 2 S-adenosyl-L-homocysteine + 2 H(+). Functionally, dimethylates a single guanine residue at position 26 of a number of tRNAs using S-adenosyl-L-methionine as donor of the methyl groups. In Methanoregula boonei (strain DSM 21154 / JCM 14090 / 6A8), this protein is tRNA (guanine(26)-N(2))-dimethyltransferase.